The following is a 265-amino-acid chain: Glutamate racemase (265 aa).

Substrate-binding positions include 12–13 and 44–45; these read DS and YG. Catalysis depends on cysteine 75, which acts as the Proton donor/acceptor. 76 to 77 is a substrate binding site; the sequence is NT. Catalysis depends on cysteine 186, which acts as the Proton donor/acceptor. A substrate-binding site is contributed by 187 to 188; sequence TH.

Belongs to the aspartate/glutamate racemases family.

It catalyses the reaction L-glutamate = D-glutamate. Its pathway is cell wall biogenesis; peptidoglycan biosynthesis. Its function is as follows. Provides the (R)-glutamate required for cell wall biosynthesis. The sequence is that of Glutamate racemase from Pseudomonas aeruginosa (strain UCBPP-PA14).